The primary structure comprises 159 residues: 2-C-methyl-D-erythritol 2,4-cyclodiphosphate synthase (159 aa).

Aspartate 10 and histidine 12 together coordinate a divalent metal cation. Residues 10–12 and 36–37 contribute to the 4-CDP-2-C-methyl-D-erythritol 2-phosphate site; these read DVH and HS. Histidine 44 provides a ligand contact to a divalent metal cation. Residues 58 to 60, 63 to 67, 102 to 108, 134 to 137, phenylalanine 141, and arginine 144 each bind 4-CDP-2-C-methyl-D-erythritol 2-phosphate; these read DIG, FPDTD, AQAPKMA, and TTTE.

The protein belongs to the IspF family. Homotrimer. A divalent metal cation is required as a cofactor.

The catalysed reaction is 4-CDP-2-C-methyl-D-erythritol 2-phosphate = 2-C-methyl-D-erythritol 2,4-cyclic diphosphate + CMP. It functions in the pathway isoprenoid biosynthesis; isopentenyl diphosphate biosynthesis via DXP pathway; isopentenyl diphosphate from 1-deoxy-D-xylulose 5-phosphate: step 4/6. In terms of biological role, involved in the biosynthesis of isopentenyl diphosphate (IPP) and dimethylallyl diphosphate (DMAPP), two major building blocks of isoprenoid compounds. Catalyzes the conversion of 4-diphosphocytidyl-2-C-methyl-D-erythritol 2-phosphate (CDP-ME2P) to 2-C-methyl-D-erythritol 2,4-cyclodiphosphate (ME-CPP) with a corresponding release of cytidine 5-monophosphate (CMP). The chain is 2-C-methyl-D-erythritol 2,4-cyclodiphosphate synthase from Idiomarina loihiensis (strain ATCC BAA-735 / DSM 15497 / L2-TR).